Here is a 212-residue protein sequence, read N- to C-terminus: Large ribosomal subunit protein uL3 (212 aa).

Residues 135-156 (MTHGNSRSHRVPGSIGQNQSPG) form a disordered region. Residue Q153 is modified to N5-methylglutamine.

It belongs to the universal ribosomal protein uL3 family. Part of the 50S ribosomal subunit. Forms a cluster with proteins L14 and L19. Post-translationally, methylated by PrmB.

One of the primary rRNA binding proteins, it binds directly near the 3'-end of the 23S rRNA, where it nucleates assembly of the 50S subunit. This chain is Large ribosomal subunit protein uL3, found in Tolumonas auensis (strain DSM 9187 / NBRC 110442 / TA 4).